The following is a 219-amino-acid chain: Protein DCL homolog, chloroplastic (219 aa).

The N-terminal 48 residues, 1–48 (MSLASIPSSSPVASPYFRCRTYIFSFSSSPLCLYFPRGDSTSLRPRVR), are a transit peptide targeting the chloroplast. The segment at 70–96 (LRRPRIASEESSEEEEEEEEENSEGDE) is disordered. Positions 79–96 (ESSEEEEEEEEENSEGDE) are enriched in acidic residues.

As to expression, expressed in leaves, stems, flowers and siliques.

The protein resides in the plastid. Its subcellular location is the chloroplast. Functionally, required for normal plastid function and plant development. Required for correct plastid ribosome assembly. Required for processing and maturation of 4.5S rRNA. This chain is Protein DCL homolog, chloroplastic, found in Arabidopsis thaliana (Mouse-ear cress).